The primary structure comprises 171 residues: MTGIGEQSIAEQVRSLLEPVLERDGYELVEVEWARLAGRWTLRVFIDKAGGVGIDDCQAVSKTVEPILDVADVIEPAYDLEVSSPGLDRPLRKPRDFDRYAGQRVHVKAYGPVAGTAPGAPARKHWTGVLKGFRDGAVELDVDGVLHRVPHDQIAKANLEYDVEGDLRRKD.

It belongs to the RimP family.

It localises to the cytoplasm. Its function is as follows. Required for maturation of 30S ribosomal subunits. This is Ribosome maturation factor RimP from Anaeromyxobacter sp. (strain K).